The primary structure comprises 67 residues: DNA-directed RNA polymerase subunit omega (67 aa).

It belongs to the RNA polymerase subunit omega family. The RNAP catalytic core consists of 2 alpha, 1 beta, 1 beta' and 1 omega subunit. When a sigma factor is associated with the core the holoenzyme is formed, which can initiate transcription.

It catalyses the reaction RNA(n) + a ribonucleoside 5'-triphosphate = RNA(n+1) + diphosphate. Functionally, promotes RNA polymerase assembly. Latches the N- and C-terminal regions of the beta' subunit thereby facilitating its interaction with the beta and alpha subunits. In Nautilia profundicola (strain ATCC BAA-1463 / DSM 18972 / AmH), this protein is DNA-directed RNA polymerase subunit omega.